The following is a 414-amino-acid chain: Peptidoglycan beta-N-acetylmuramidase NamZ (414 aa).

The first 23 residues, 1–23 (MRKTIFAFLTGLMMFGTITAASA), serve as a signal peptide directing secretion.

It belongs to the glycoside hydrolase 171 family. In terms of assembly, homodimer in solution.

The protein localises to the secreted. The enzyme catalyses Hydrolysis of terminal, non-reducing N-acetylmuramic residues.. Catalyzes the exo-lytic cleavage of beta-1,4-N-acetylmuramate (beta-1,4-MurNAc) from the non-reducing ends of peptidoglycan chains. Specifically hydrolyzes the natural, peptidoglycan-derived disaccharide MurNAc-GlcNAc and the artificial substrate para-nitrophenyl beta-N-acetylmuramic acid (pNP-MurNAc). Requires a MurNAc entity at the non-reducing end, and cannot cleave GlcNAc-MurNAc. Probably plays a role in cell wall turnover and recycling. In Bacillus subtilis (strain 168), this protein is Peptidoglycan beta-N-acetylmuramidase NamZ.